The primary structure comprises 246 residues: Myelin-oligodendrocyte glycoprotein (246 aa).

The N-terminal stretch at 1 to 28 (MASLLSSSLPSCLPSLLFLLLQLTSSSA) is a signal peptide. An Ig-like V-type domain is found at 29 to 144 (GQFRVIGPGH…EEAAMELKVE (116 aa)). Residues 29-153 (GQFRVIGPGH…EDPFYWINPG (125 aa)) are Extracellular-facing. Cysteine 52 and cysteine 126 are oxidised to a cystine. The N-linked (GlcNAc...) asparagine glycan is linked to asparagine 59. Residues 154–174 (VLVLIAVLPVLLLQITVGLVF) form a helical membrane-spanning segment. The Cytoplasmic segment spans residues 175-209 (LCLQRRLRGKLWAEIENLHRTFDPHFLMVPCWKIT). The helical transmembrane segment at 210-230 (LFVIVPVLGPLVALIICYNWL) threads the bilayer. At 231–246 (HRRLAGQFLEELRNPF) the chain is on the extracellular side.

This sequence belongs to the immunoglobulin superfamily. BTN/MOG family. Homodimer. Found exclusively in the CNS, where it is localized on the surface of myelin and oligodendrocyte cytoplasmic membranes.

It is found in the membrane. Its function is as follows. Mediates homophilic cell-cell adhesion. Minor component of the myelin sheath. May be involved in completion and/or maintenance of the myelin sheath and in cell-cell communication. This chain is Myelin-oligodendrocyte glycoprotein (MOG), found in Bos taurus (Bovine).